Reading from the N-terminus, the 185-residue chain is Ribosome-recycling factor (185 aa).

The interval 138 to 160 (AMDKAVKDGEVGEDEGARGEKEL) is disordered.

This sequence belongs to the RRF family.

The protein resides in the cytoplasm. Its function is as follows. Responsible for the release of ribosomes from messenger RNA at the termination of protein biosynthesis. May increase the efficiency of translation by recycling ribosomes from one round of translation to another. In Micrococcus luteus (strain ATCC 4698 / DSM 20030 / JCM 1464 / CCM 169 / CCUG 5858 / IAM 1056 / NBRC 3333 / NCIMB 9278 / NCTC 2665 / VKM Ac-2230) (Micrococcus lysodeikticus), this protein is Ribosome-recycling factor.